The primary structure comprises 353 residues: MHLTIMRRFAVLLLLAIFLGGCSGSNGAAEEKWKMKVIWHVDTSGEPFMDLSPDGELAAAVDWNNAKIYLVKPDGESVVFDIQGQDAVKPVVSGVALKDGVAYVLGSYEDFVGIRKYSWNGEVGEERHGWAGSVSDNILRSPSGNHLCYLITIDAGKQELYCDGVKMTLGGDYYFLNSVSDSGVVVISSGDGTHVFKEGNEVLSFNTSNVVAYKDRVLVNEEDFLRVYDLSGNLVGEKEGYTFSLTTLLRWTLLPTERYIFRYEPLEDTHVITWDIKQVETLPGFPQFANDHFVVTSKNGVLHCYSLKDFHEVFSVEMPEDDGLIKLSDDGRVMLVSGENGGYWLYVSSENNF.

Residues 1 to 28 (MHLTIMRRFAVLLLLAIFLGGCSGSNGA) form the signal peptide.

This is an uncharacterized protein from Archaeoglobus fulgidus (strain ATCC 49558 / DSM 4304 / JCM 9628 / NBRC 100126 / VC-16).